The following is a 349-amino-acid chain: ATP phosphoribosyltransferase regulatory subunit (349 aa).

Residues 327–349 (GRGRGVRPRRASARGGRARARPR) are disordered. The segment covering 330–349 (RGVRPRRASARGGRARARPR) has biased composition (basic residues).

Belongs to the class-II aminoacyl-tRNA synthetase family. HisZ subfamily. Heteromultimer composed of HisG and HisZ subunits.

It localises to the cytoplasm. It participates in amino-acid biosynthesis; L-histidine biosynthesis; L-histidine from 5-phospho-alpha-D-ribose 1-diphosphate: step 1/9. Required for the first step of histidine biosynthesis. May allow the feedback regulation of ATP phosphoribosyltransferase activity by histidine. This is ATP phosphoribosyltransferase regulatory subunit from Anaeromyxobacter sp. (strain K).